Reading from the N-terminus, the 878-residue chain is von Willebrand factor A domain-containing protein DDB_G0267758 (878 aa).

The VIT domain maps to 36-169; that stretch reads GLFLTENNKK…TVKITLTITS (134 aa). In terms of domain architecture, VWFA spans 316–496; the sequence is EFIFLIDCSG…ISLKPMFSNI (181 aa). Low complexity predominate over residues 595 to 623; sequence SSSSSSSSSSSSSSSSSSSSSSSSSSSSS. 2 disordered regions span residues 595–638 and 752–774; these read SSSS…HRLS and SVKKSKKSETKEETTKTTSSKTK. The segment covering 624-635 has biased composition (polar residues); the sequence is TTTATTNQNQIH.

This chain is von Willebrand factor A domain-containing protein DDB_G0267758, found in Dictyostelium discoideum (Social amoeba).